The following is a 116-amino-acid chain: Large ribosomal subunit protein bL19 (116 aa).

It belongs to the bacterial ribosomal protein bL19 family.

In terms of biological role, this protein is located at the 30S-50S ribosomal subunit interface and may play a role in the structure and function of the aminoacyl-tRNA binding site. The polypeptide is Large ribosomal subunit protein bL19 (Shewanella loihica (strain ATCC BAA-1088 / PV-4)).